A 115-amino-acid chain; its full sequence is Flagellar transcriptional regulator FlhD (115 aa).

It belongs to the FlhD family. In terms of assembly, homodimer; disulfide-linked. Forms a heterohexamer composed of two FlhC and four FlhD subunits. Each FlhC binds a FlhD dimer, forming a heterotrimer, and a hexamer assembles by dimerization of two heterotrimers.

It localises to the cytoplasm. Its function is as follows. Functions in complex with FlhC as a master transcriptional regulator that regulates transcription of several flagellar and non-flagellar operons by binding to their promoter region. Activates expression of class 2 flagellar genes, including fliA, which is a flagellum-specific sigma factor that turns on the class 3 genes. Also regulates genes whose products function in a variety of physiological pathways. This is Flagellar transcriptional regulator FlhD from Edwardsiella ictaluri (strain 93-146).